The primary structure comprises 136 residues: MDVAVKKVEVRQLKKGKYIMIDDEPCKIVEYTTSSPGKHGSAKARIVAVGLFDGKKRTLTKPVDAKVDVPVIERKTAQVVSDMGDTVQLMDMETYETFEVQKPEDEELASQLEPGTMVEYMEAAGKRKIVGIKEEE.

A Hypusine modification is found at lysine 38.

The protein belongs to the eIF-5A family.

The protein localises to the cytoplasm. Its function is as follows. Functions by promoting the formation of the first peptide bond. The sequence is that of Translation initiation factor 5A from Methanopyrus kandleri (strain AV19 / DSM 6324 / JCM 9639 / NBRC 100938).